The sequence spans 643 residues: RNA-binding protein RO60 (643 aa).

The TROVE domain maps to 63-473 (VENNAGGFVF…AFVNAPPTGK (411 aa)). The segment at 186–390 (RTPTHLFEFV…SMPMTAMIRN (205 aa)) is RNA-binding. A VWFA-like domain region spans residues 465–643 (FVNAPPTGKR…IVHEFVTGKI (179 aa)). Residues Ser-482, Ser-484, and Thr-549 each contribute to the a divalent metal cation site.

The protein belongs to the Ro 60 kDa family.

Its subcellular location is the cytoplasm. RNA-binding protein that binds to misfolded non-coding RNAs, pre-5S rRNA, and several small cytoplasmic RNA molecules known as Y RNAs. In Caenorhabditis elegans, this protein is RNA-binding protein RO60.